A 1428-amino-acid chain; its full sequence is DNA topoisomerase 2 (1428 aa).

ATP contacts are provided by residues Asn70, Asn99, 127–129 (SSN), and 140–147 (GRNGYGAK). The tract at residues 333–336 (KKKK) is interaction with DNA. ATP is bound at residue 365-367 (QTK). Residues 443-557 (CTLVLTEGDS…GLLDIQGFLL (115 aa)) form the Toprim domain. Glu449, Asp526, and Asp528 together coordinate Mg(2+). One can recognise a Topo IIA-type catalytic domain in the interval 692–1159 (IPNVLDGFKP…SAKDIWNTDL (468 aa)). The active-site O-(5'-phospho-DNA)-tyrosine intermediate is Tyr782. Residues 965–974 (KLISPISLMN) form an interaction with DNA region. Disordered stretches follow at residues 1083-1102 (KGAT…TENV), 1176-1217 (ARGG…RKGK), 1240-1288 (KAPT…ELSK), and 1303-1428 (MGST…NEED). Thr1086 bears the Phosphothreonine; by CK2 mark. Residue Ser1087 is modified to Phosphoserine; by CK2. A compositionally biased stretch (basic residues) spans 1207 to 1217 (KNKKSTARKGK). Ser1252 bears the Phosphoserine mark. Phosphothreonine; by CK2 is present on Thr1258. 3 positions are modified to phosphoserine; by CK2: Ser1266, Ser1269, and Ser1272. Residues 1275 to 1286 (DIKKEDKDEGEL) are compositionally biased toward basic and acidic residues. Residues 1332–1347 (TAVKPKLAKKPVRKQQ) show a composition bias toward basic residues. A phosphoserine; by CK2 mark is found at Ser1353, Ser1356, Ser1408, and Ser1423. A compositionally biased stretch (acidic residues) spans 1403–1428 (ELSDDSFIEDDEEENQGSDVSFNEED).

It belongs to the type II topoisomerase family. In terms of assembly, homodimer. It depends on Mg(2+) as a cofactor. Mn(2+) serves as cofactor. Requires Ca(2+) as cofactor. Phosphorylation enhances the activity. Stimulates decatenation activity.

It localises to the nucleus. The catalysed reaction is ATP-dependent breakage, passage and rejoining of double-stranded DNA.. In terms of biological role, control of topological states of DNA by transient breakage and subsequent rejoining of DNA strands. Topoisomerase II makes double-strand breaks. Essential during mitosis and meiosis for proper segregation of daughter chromosomes. The protein is DNA topoisomerase 2 (TOP2) of Saccharomyces cerevisiae (strain ATCC 204508 / S288c) (Baker's yeast).